The primary structure comprises 524 residues: Metalloendopeptidase OMA1, mitochondrial (524 aa).

The N-terminal 13 residues, 1 to 13, are a transit peptide targeting the mitochondrion; it reads MSFICGLQSAARN. Residues 14 to 143 constitute a propeptide that is removed on maturation; it reads HVFFRFNSLS…RNFHTSPRFQ (130 aa). Over 144-195 the chain is Mitochondrial matrix; that stretch reads AAPVPLLLMILKPVQKLFAIIVGRGIRKWWQALPPNKKEVVKENIRKNKWKL. Residues 148-167 form a cardiolipin-binding region; that stretch reads PLLLMILKPVQKLFAIIVGR. A stress-sensor region region spans residues 165–195; that stretch reads VGRGIRKWWQALPPNKKEVVKENIRKNKWKL. The chain crosses the membrane as a helical span at residues 196–216; sequence FLGLSSFGLLFVVFYFTHLEV. His-327 contacts Zn(2+). The active site involves Glu-328. The Zn(2+) site is built by His-331 and Glu-392. Cys-407 and Cys-465 are oxidised to a cystine.

The protein belongs to the peptidase M48 family. As to quaternary structure, homooligomer. Requires Zn(2+) as cofactor. Post-translationally, may form a redox-dependent disulfide bond. Exists in a semi-oxidized state and is activated by prolonged hypoxia. Autocatalytically cleaved in response to mitochondrial depolarization both at the N-terminus and C-terminus to generate the short active form (S-OMA1). Autocatalytic processing at the C-terminus takes place at residues 447-456. The S-OMA1 form is unstable. OMA1 pre-processing by AFG3L2 may participate in maturation before OMA1 autocatalytic cleavage. Degraded by YMEL1 in response to membrane depolarization. Protein turnover is regulated by prohibitin (PHB and PHB2), which promotes degradation of OMA1 in a cardiolipin-binding manner. In terms of tissue distribution, widely expressed, with strong expression in the heart, skeletal muscle, kidney and liver.

The protein localises to the mitochondrion inner membrane. Protease activity is activated upon autocatalytic cleavage in response to mitochondrial depolarization. Its function is as follows. Metalloprotease that is part of the quality control system in the inner membrane of mitochondria. Activated in response to various mitochondrial stress, leading to the proteolytic cleavage of target proteins, such as OPA1, UQCC3 and DELE1. Involved in the fusion of the mitochondrial inner membranes by mediating cleavage of OPA1 at S1 position, generating the soluble OPA1 (S-OPA1), which cooperates with the membrane form (L-OPA1) to coordinate the fusion of mitochondrial inner membranes. Following stress conditions that induce loss of mitochondrial membrane potential, mediates cleavage of OPA1, leading to excess production of soluble OPA1 (S-OPA1) and negative regulation of mitochondrial fusion. Involved in mitochondrial safeguard in response to transient mitochondrial membrane depolarization (flickering) by catalyzing cleavage of OPA1, leading to excess production of S-OPA1, preventing mitochondrial hyperfusion. Also acts as a regulator of apoptosis: upon BAK and BAX aggregation, mediates cleavage of OPA1, leading to the remodeling of mitochondrial cristae and allowing the release of cytochrome c from mitochondrial cristae. In depolarized mitochondria, may also act as a backup protease for PINK1 by mediating PINK1 cleavage and promoting its subsequent degradation by the proteasome. May also cleave UQCC3 in response to mitochondrial depolarization. Also acts as an activator of the integrated stress response (ISR): in response to mitochondrial stress, mediates cleavage of DELE1 to generate the processed form of DELE1 (S-DELE1), which translocates to the cytosol and activates EIF2AK1/HRI to trigger the ISR. Its role in mitochondrial quality control is essential for regulating lipid metabolism as well as to maintain body temperature and energy expenditure under cold-stress conditions. Binds cardiolipin, possibly regulating its protein turnover. Required for the stability of the respiratory supercomplexes. The chain is Metalloendopeptidase OMA1, mitochondrial from Homo sapiens (Human).